A 336-amino-acid chain; its full sequence is Holliday junction branch migration complex subunit RuvB (336 aa).

The segment at 1–181 (MDRIVEIEKV…FGMDFRLQFY (181 aa)) is large ATPase domain (RuvB-L). Residues leucine 20, arginine 21, glycine 62, lysine 65, threonine 66, threonine 67, 128–130 (EDF), arginine 171, tyrosine 181, and arginine 218 contribute to the ATP site. Residue threonine 66 participates in Mg(2+) binding. Residues 182 to 252 (TSSELSRIVQ…RAKEGLNALG (71 aa)) are small ATPAse domain (RuvB-S). Residues 255-336 (SLGFDEMDIR…KIDIEKGLFE (82 aa)) are head domain (RuvB-H). 2 residues coordinate DNA: arginine 309 and arginine 314.

The protein belongs to the RuvB family. In terms of assembly, homohexamer. Forms an RuvA(8)-RuvB(12)-Holliday junction (HJ) complex. HJ DNA is sandwiched between 2 RuvA tetramers; dsDNA enters through RuvA and exits via RuvB. An RuvB hexamer assembles on each DNA strand where it exits the tetramer. Each RuvB hexamer is contacted by two RuvA subunits (via domain III) on 2 adjacent RuvB subunits; this complex drives branch migration. In the full resolvosome a probable DNA-RuvA(4)-RuvB(12)-RuvC(2) complex forms which resolves the HJ.

It is found in the cytoplasm. It carries out the reaction ATP + H2O = ADP + phosphate + H(+). Functionally, the RuvA-RuvB-RuvC complex processes Holliday junction (HJ) DNA during genetic recombination and DNA repair, while the RuvA-RuvB complex plays an important role in the rescue of blocked DNA replication forks via replication fork reversal (RFR). RuvA specifically binds to HJ cruciform DNA, conferring on it an open structure. The RuvB hexamer acts as an ATP-dependent pump, pulling dsDNA into and through the RuvAB complex. RuvB forms 2 homohexamers on either side of HJ DNA bound by 1 or 2 RuvA tetramers; 4 subunits per hexamer contact DNA at a time. Coordinated motions by a converter formed by DNA-disengaged RuvB subunits stimulates ATP hydrolysis and nucleotide exchange. Immobilization of the converter enables RuvB to convert the ATP-contained energy into a lever motion, pulling 2 nucleotides of DNA out of the RuvA tetramer per ATP hydrolyzed, thus driving DNA branch migration. The RuvB motors rotate together with the DNA substrate, which together with the progressing nucleotide cycle form the mechanistic basis for DNA recombination by continuous HJ branch migration. Branch migration allows RuvC to scan DNA until it finds its consensus sequence, where it cleaves and resolves cruciform DNA. This chain is Holliday junction branch migration complex subunit RuvB, found in Campylobacter concisus (strain 13826).